Reading from the N-terminus, the 484-residue chain is Ribosome biogenesis protein YTM1 (484 aa).

Residues 13-95 form a ubiquitin-like (UBL) domain region; it reads VKVTFTTTEA…ESNLTLQYVR (83 aa). WD repeat units lie at residues 122 to 161, 168 to 206, 216 to 255, 288 to 328, 330 to 373, 379 to 419, and 448 to 484; these read SPSG…IATS, GHTA…HFSG, GHTG…APEA, IHSA…VVTT, STSH…ATTS, GHAN…PATQ, and GEGC…VVAE.

It belongs to the WD repeat WDR12/YTM1 family. In terms of assembly, component of the NOP7 complex, composed of ERB1, NOP7 and YTM1. The complex is held together by ERB1, which interacts with NOP7 via its N-terminal domain and with YTM1 via a high-affinity interaction between the seven-bladed beta-propeller domains of the 2 proteins. The NOP7 complex associates with the 66S pre-ribosome. Interacts (via UBL domain) with MDN1 (via VWFA/MIDAS domain).

The protein resides in the nucleus. It is found in the nucleolus. Its subcellular location is the nucleoplasm. Component of the NOP7 complex, which is required for maturation of the 25S and 5.8S ribosomal RNAs and formation of the 60S ribosome. The polypeptide is Ribosome biogenesis protein YTM1 (Chaetomium globosum (strain ATCC 6205 / CBS 148.51 / DSM 1962 / NBRC 6347 / NRRL 1970) (Soil fungus)).